A 465-amino-acid chain; its full sequence is Methylenetetrahydrofolate--tRNA-(uracil-5-)-methyltransferase TrmFO (465 aa).

3 to 8 (GAGLAG) lines the FAD pocket.

Belongs to the MnmG family. TrmFO subfamily. The cofactor is FAD.

The protein localises to the cytoplasm. The catalysed reaction is uridine(54) in tRNA + (6R)-5,10-methylene-5,6,7,8-tetrahydrofolate + NADH + H(+) = 5-methyluridine(54) in tRNA + (6S)-5,6,7,8-tetrahydrofolate + NAD(+). The enzyme catalyses uridine(54) in tRNA + (6R)-5,10-methylene-5,6,7,8-tetrahydrofolate + NADPH + H(+) = 5-methyluridine(54) in tRNA + (6S)-5,6,7,8-tetrahydrofolate + NADP(+). Catalyzes the folate-dependent formation of 5-methyl-uridine at position 54 (M-5-U54) in all tRNAs. The polypeptide is Methylenetetrahydrofolate--tRNA-(uracil-5-)-methyltransferase TrmFO (Bradyrhizobium sp. (strain BTAi1 / ATCC BAA-1182)).